A 57-amino-acid polypeptide reads, in one-letter code: Large ribosomal subunit protein bL32c (57 aa).

This sequence belongs to the bacterial ribosomal protein bL32 family.

The protein localises to the plastid. The protein resides in the chloroplast. The polypeptide is Large ribosomal subunit protein bL32c (Drimys granadensis).